The sequence spans 510 residues: 2,3-bisphosphoglycerate-independent phosphoglycerate mutase (510 aa).

2 residues coordinate Mn(2+): Asp-14 and Ser-64. The Phosphoserine intermediate role is filled by Ser-64. Residues His-125, 155 to 156 (RD), Arg-187, Arg-193, 259 to 262 (RADR), and Lys-332 each bind substrate. Residues Asp-399, His-403, Asp-440, His-441, and His-459 each coordinate Mn(2+).

The protein belongs to the BPG-independent phosphoglycerate mutase family. Monomer. The cofactor is Mn(2+).

It carries out the reaction (2R)-2-phosphoglycerate = (2R)-3-phosphoglycerate. It functions in the pathway carbohydrate degradation; glycolysis; pyruvate from D-glyceraldehyde 3-phosphate: step 3/5. In terms of biological role, catalyzes the interconversion of 2-phosphoglycerate and 3-phosphoglycerate. The sequence is that of 2,3-bisphosphoglycerate-independent phosphoglycerate mutase from Pseudomonas savastanoi pv. phaseolicola (strain 1448A / Race 6) (Pseudomonas syringae pv. phaseolicola (strain 1448A / Race 6)).